The sequence spans 88 residues: FXYD domain-containing ion transport regulator 3 (88 aa).

A signal peptide (not cleaved) is located at residues 1–20 (MQEVVLSLLVLLAGLPTLDA). The Extracellular segment spans residues 1-38 (MQEVVLSLLVLLAGLPTLDANDPENKNDPFYYDWYSLR). A helical membrane pass occupies residues 39–59 (VGGLICAGILCALGIIVLMSG). The Cytoplasmic portion of the chain corresponds to 60 to 88 (KCKCKFRQKPSHRPGEGPPLITPGSAHNC). The disordered stretch occupies residues 67–88 (QKPSHRPGEGPPLITPGSAHNC).

The protein belongs to the FXYD family. In terms of assembly, regulatory subunit of the sodium/potassium-transporting ATPase which is composed of a catalytic alpha subunit, a non-catalytic beta subunit and an additional regulatory subunit. Interacts with catalytic alpha subunit ATP1A1. Also interacts with non-catalytic beta subunit ATP1B1. Interacts with the ATP1A1-ATP1B1, ATP1A2-ATP1B1 and ATP1A3-ATP1B1 NKA isozymes. In terms of processing, glutathionylated. Expressed at high levels in heart, skeletal muscle and liver with low levels of expression in breast, brain, lung, stomach and colon. In the gastric gland, mainly expressed in the mucus cells forming the upper part of the gland and is absent from the parietal cells.

The protein resides in the cell membrane. Functionally, associates with and regulates the activity of the sodium/potassium-transporting ATPase (NKA) which transports Na(+) out of the cell and K(+) into the cell. Reduces glutathionylation of the NKA beta-1 subunit ATP1B1, thus reversing glutathionylation-mediated inhibition of ATP1B1. Induces a hyperpolarization-activated chloride current when expressed in Xenopus oocytes. This is FXYD domain-containing ion transport regulator 3 (Fxyd3) from Mus musculus (Mouse).